We begin with the raw amino-acid sequence, 350 residues long: Transmembrane protein 185B (350 aa).

7 helical membrane-spanning segments follow: residues 16–36 (LIYA…DGII), 41–61 (WAVF…ASVG), 81–101 (FKAM…EILV), 111–131 (FWLL…AACV), 168–188 (WLVV…VVLY), 211–231 (VTMA…EVLL), and 240–260 (TFSY…LMAT).

Belongs to the TMEM185 family.

It is found in the membrane. The sequence is that of Transmembrane protein 185B (Tmem185b) from Mus musculus (Mouse).